A 328-amino-acid chain; its full sequence is Malate dehydrogenase (328 aa).

11-17 (GAAGQIG) contacts NAD(+). Substrate contacts are provided by Arg-94 and Arg-100. Residues Asn-107, Gln-114, and 131-133 (VGN) contribute to the NAD(+) site. Substrate-binding residues include Asn-133 and Arg-164. His-189 (proton acceptor) is an active-site residue.

This sequence belongs to the LDH/MDH superfamily. MDH type 2 family.

The enzyme catalyses (S)-malate + NAD(+) = oxaloacetate + NADH + H(+). Its function is as follows. Catalyzes the reversible oxidation of malate to oxaloacetate. The sequence is that of Malate dehydrogenase from Stenotrophomonas maltophilia (strain K279a).